The following is a 385-amino-acid chain: Probable tRNA sulfurtransferase (385 aa).

A THUMP domain is found at alanine 65–arginine 165. ATP-binding positions include leucine 183–leucine 184, threonine 208–phenylalanine 209, arginine 267, glycine 285, and glutamine 294.

It belongs to the ThiI family.

It localises to the cytoplasm. It catalyses the reaction [ThiI sulfur-carrier protein]-S-sulfanyl-L-cysteine + a uridine in tRNA + 2 reduced [2Fe-2S]-[ferredoxin] + ATP + H(+) = [ThiI sulfur-carrier protein]-L-cysteine + a 4-thiouridine in tRNA + 2 oxidized [2Fe-2S]-[ferredoxin] + AMP + diphosphate. The enzyme catalyses [ThiS sulfur-carrier protein]-C-terminal Gly-Gly-AMP + S-sulfanyl-L-cysteinyl-[cysteine desulfurase] + AH2 = [ThiS sulfur-carrier protein]-C-terminal-Gly-aminoethanethioate + L-cysteinyl-[cysteine desulfurase] + A + AMP + 2 H(+). The protein operates within cofactor biosynthesis; thiamine diphosphate biosynthesis. Functionally, catalyzes the ATP-dependent transfer of a sulfur to tRNA to produce 4-thiouridine in position 8 of tRNAs, which functions as a near-UV photosensor. Also catalyzes the transfer of sulfur to the sulfur carrier protein ThiS, forming ThiS-thiocarboxylate. This is a step in the synthesis of thiazole, in the thiamine biosynthesis pathway. The sulfur is donated as persulfide by IscS. This is Probable tRNA sulfurtransferase from Mycoplasma genitalium (strain ATCC 33530 / DSM 19775 / NCTC 10195 / G37) (Mycoplasmoides genitalium).